We begin with the raw amino-acid sequence, 443 residues long: C4-dicarboxylate transport protein (443 aa).

The next 9 helical transmembrane spans lie at 17 to 37 (PFYS…ILLG), 57 to 77 (LVKM…IAGM), 92 to 112 (LYFL…ANVV), 139 to 159 (EQSI…GAFA), 161 to 181 (GDIL…AMVG), 201 to 221 (LVAI…AFTI), 234 to 254 (MLIG…LGAV), 320 to 340 (IYMT…LSWG), and 368 to 388 (AATL…ILGI).

It belongs to the dicarboxylate/amino acid:cation symporter (DAACS) (TC 2.A.23) family.

The protein resides in the cell inner membrane. In terms of biological role, responsible for the transport of dicarboxylates such as succinate, fumarate, and malate from the periplasm across the membrane. The chain is C4-dicarboxylate transport protein from Rhizobium leguminosarum bv. trifolii (strain WSM2304).